We begin with the raw amino-acid sequence, 338 residues long: MEKQTVAVLGPGSWGTALSQVLNDNGHEVRIWGNLPEQINEINTYHTNKHYFKDVVLDENIIAYTDLAETLKDVDAILFVVPTKVTRLVAQQVAQTLDHKAIIMHASKGLEPDSHKRLSTILEEEIPEQLRSDIVVVSGPSHAEETIVRDLTLITAASKDLQTAQYVQELFSNHYFRLYTNTDVIGVETAGALKNIIAVGAGALHGLGFGDNAKAAIIARGLAEITRLGVALGASPLTYSGLSGVGDLIVTGTSIHSRNWRAGDALGRGESLADIEANMGMVIEGISTTRAAYELAQELGVYMPITQAIYQVIYHGTNIKDAIYDIMNNEFKAENEWS.

NADPH contacts are provided by Ser13, Trp14, and Lys108. Residues Lys108, Gly139, and Ser141 each contribute to the sn-glycerol 3-phosphate site. Ala143 is an NADPH binding site. The sn-glycerol 3-phosphate site is built by Lys194, Asp247, Ser257, Arg258, and Asn259. Residue Lys194 is the Proton acceptor of the active site. Arg258 contributes to the NADPH binding site. NADPH-binding residues include Val282 and Glu284.

Belongs to the NAD-dependent glycerol-3-phosphate dehydrogenase family.

The protein localises to the cytoplasm. It catalyses the reaction sn-glycerol 3-phosphate + NAD(+) = dihydroxyacetone phosphate + NADH + H(+). The catalysed reaction is sn-glycerol 3-phosphate + NADP(+) = dihydroxyacetone phosphate + NADPH + H(+). Its pathway is membrane lipid metabolism; glycerophospholipid metabolism. Catalyzes the reduction of the glycolytic intermediate dihydroxyacetone phosphate (DHAP) to sn-glycerol 3-phosphate (G3P), the key precursor for phospholipid synthesis. In Streptococcus pneumoniae (strain P1031), this protein is Glycerol-3-phosphate dehydrogenase [NAD(P)+].